A 373-amino-acid polypeptide reads, in one-letter code: Quinolinate synthase (373 aa).

The iminosuccinate site is built by His46 and Ser63. Cys109 lines the [4Fe-4S] cluster pocket. Residues 142–144 and Ser163 contribute to the iminosuccinate site; that span reads YMN. Cys232 serves as a coordination point for [4Fe-4S] cluster. Iminosuccinate contacts are provided by residues 258–260 and Thr275; that span reads HPE. Cys324 contacts [4Fe-4S] cluster.

Belongs to the quinolinate synthase family. Type 3 subfamily. The cofactor is [4Fe-4S] cluster.

It localises to the cytoplasm. The enzyme catalyses iminosuccinate + dihydroxyacetone phosphate = quinolinate + phosphate + 2 H2O + H(+). Its pathway is cofactor biosynthesis; NAD(+) biosynthesis; quinolinate from iminoaspartate: step 1/1. Functionally, catalyzes the condensation of iminoaspartate with dihydroxyacetone phosphate to form quinolinate. In Acidobacterium capsulatum (strain ATCC 51196 / DSM 11244 / BCRC 80197 / JCM 7670 / NBRC 15755 / NCIMB 13165 / 161), this protein is Quinolinate synthase.